A 164-amino-acid chain; its full sequence is S-ribosylhomocysteine lyase (164 aa).

Residues His61, His65, and Cys131 each coordinate Fe cation.

This sequence belongs to the LuxS family. As to quaternary structure, homodimer. Fe cation serves as cofactor.

It carries out the reaction S-(5-deoxy-D-ribos-5-yl)-L-homocysteine = (S)-4,5-dihydroxypentane-2,3-dione + L-homocysteine. Its function is as follows. Involved in the synthesis of autoinducer 2 (AI-2) which is secreted by bacteria and is used to communicate both the cell density and the metabolic potential of the environment. The regulation of gene expression in response to changes in cell density is called quorum sensing. Catalyzes the transformation of S-ribosylhomocysteine (RHC) to homocysteine (HC) and 4,5-dihydroxy-2,3-pentadione (DPD). This is S-ribosylhomocysteine lyase from Bifidobacterium longum (strain DJO10A).